Reading from the N-terminus, the 341-residue chain is Anthranilate phosphoribosyltransferase (341 aa).

Residues Gly82, 85 to 86 (GD), Thr90, 92 to 95 (NIST), 110 to 118 (KHGNRAITS), and Thr122 contribute to the 5-phospho-alpha-D-ribose 1-diphosphate site. Gly82 is a binding site for anthranilate. Ser94 serves as a coordination point for Mg(2+). Anthranilate is bound at residue Asn113. Arg168 is a binding site for anthranilate. Mg(2+) contacts are provided by Asp226 and Glu227.

Belongs to the anthranilate phosphoribosyltransferase family. In terms of assembly, homodimer. The cofactor is Mg(2+).

The catalysed reaction is N-(5-phospho-beta-D-ribosyl)anthranilate + diphosphate = 5-phospho-alpha-D-ribose 1-diphosphate + anthranilate. The protein operates within amino-acid biosynthesis; L-tryptophan biosynthesis; L-tryptophan from chorismate: step 2/5. Catalyzes the transfer of the phosphoribosyl group of 5-phosphorylribose-1-pyrophosphate (PRPP) to anthranilate to yield N-(5'-phosphoribosyl)-anthranilate (PRA). This chain is Anthranilate phosphoribosyltransferase, found in Caulobacter vibrioides (strain ATCC 19089 / CIP 103742 / CB 15) (Caulobacter crescentus).